The sequence spans 252 residues: Phosphonates import ATP-binding protein PhnC 1 (252 aa).

The ABC transporter domain occupies 2-244 (ISLNKLGVTY…QLEEIYQTLS (243 aa)). Position 35-42 (35-42 (GSSGAGKS)) interacts with ATP.

Belongs to the ABC transporter superfamily. Phosphonates importer (TC 3.A.1.9.1) family. The complex is composed of two ATP-binding proteins (PhnC), two transmembrane proteins (PhnE) and a solute-binding protein (PhnD).

It is found in the cell inner membrane. The catalysed reaction is phosphonate(out) + ATP + H2O = phosphonate(in) + ADP + phosphate + H(+). In terms of biological role, part of the ABC transporter complex PhnCDE involved in phosphonates import. Responsible for energy coupling to the transport system. This is Phosphonates import ATP-binding protein PhnC 1 from Trichodesmium erythraeum (strain IMS101).